The chain runs to 142 residues: uncharacterized protein (142 aa).

Residues 1 to 14 (MKNVSPRRNKHYKS) show a composition bias toward basic residues. The interval 1 to 40 (MKNVSPRRNKHYKSYKPQVPLKKPVLLPQHPPYRNRRKKK) is disordered. Over residues 16 to 28 (KPQVPLKKPVLLP) the composition is skewed to low complexity.

This is an uncharacterized protein from Aquifex aeolicus (strain VF5).